Consider the following 586-residue polypeptide: Pectinesterase 1 (586 aa).

A signal peptide spans 1 to 49 (MDSVNSFKGYGKVDEAQDLALKKKTRKRLLLLSISVVVLIAVIIAAVVA). 5 N-linked (GlcNAc...) asparagine glycosylation sites follow: asparagine 57, asparagine 97, asparagine 154, asparagine 201, and asparagine 207. An RRLM cleavage motif motif is present at residues 250-253 (RRLM). Positions 269-272 (RRLL) match the RRLL cleavage motif motif. Substrate is bound by residues threonine 355 and glutamine 385. Aspartate 408 acts as the Proton donor in catalysis. Cysteine 422 and cysteine 442 form a disulfide bridge. Residue aspartate 429 is the Nucleophile of the active site. N-linked (GlcNAc...) asparagine glycosylation occurs at asparagine 466. Residues arginine 492 and tryptophan 494 each coordinate substrate.

The protein in the N-terminal section; belongs to the PMEI family. It in the C-terminal section; belongs to the pectinesterase family. Interacts with SBT6.1. Expressed in siliques.

Its subcellular location is the secreted. It localises to the cell wall. The protein localises to the golgi apparatus membrane. The catalysed reaction is [(1-&gt;4)-alpha-D-galacturonosyl methyl ester](n) + n H2O = [(1-&gt;4)-alpha-D-galacturonosyl](n) + n methanol + n H(+). It participates in glycan metabolism; pectin degradation; 2-dehydro-3-deoxy-D-gluconate from pectin: step 1/5. Functionally, acts in the modification of cell walls via demethylesterification of cell wall pectin. Demethylates protein phosphatase 2A (PP2A) that have been reversibly carboxymethylated by LCMT1. Acts as a negative regulators of genes involved in salt stress response. The polypeptide is Pectinesterase 1 (PME1) (Arabidopsis thaliana (Mouse-ear cress)).